The chain runs to 136 residues: Transcription antitermination protein NusB (136 aa).

Belongs to the NusB family.

Its function is as follows. Involved in transcription antitermination. Required for transcription of ribosomal RNA (rRNA) genes. Binds specifically to the boxA antiterminator sequence of the ribosomal RNA (rrn) operons. The chain is Transcription antitermination protein NusB from Salinispora tropica (strain ATCC BAA-916 / DSM 44818 / JCM 13857 / NBRC 105044 / CNB-440).